The primary structure comprises 487 residues: DNA polymerase delta small subunit (487 aa).

At Met-1 the chain carries N-acetylmethionine. Residue Ser-20 is modified to Phosphoserine.

The protein belongs to the DNA polymerase delta/II small subunit family. DNA polymerase delta is a heterotrimer of POL3, POL32 and HYS2.

It is found in the nucleus. It catalyses the reaction DNA(n) + a 2'-deoxyribonucleoside 5'-triphosphate = DNA(n+1) + diphosphate. Functionally, DNA polymerase delta (DNA polymerase III) participates in chromosomal DNA replication. It is required during synthesis of the leading and lagging DNA strands at the replication fork and binds at/or near replication origins and moves along DNA with the replication fork. It has 3'-5' proofreading exonuclease activity that correct errors arising during DNA replication. It is also involved in DNA synthesis during DNA repair. The sequence is that of DNA polymerase delta small subunit (POL31) from Saccharomyces cerevisiae (strain ATCC 204508 / S288c) (Baker's yeast).